Consider the following 342-residue polypeptide: Anthranilate phosphoribosyltransferase (342 aa).

5-phospho-alpha-D-ribose 1-diphosphate is bound by residues Gly84, Gly87–Asp88, Thr92, Asn94–Thr97, Lys112–Ser120, and Ser124. Gly84 contacts anthranilate. Residue Ser96 participates in Mg(2+) binding. Position 115 (Asn115) interacts with anthranilate. Residue Arg170 participates in anthranilate binding. Positions 229 and 230 each coordinate Mg(2+).

It belongs to the anthranilate phosphoribosyltransferase family. Homodimer. Mg(2+) is required as a cofactor.

It catalyses the reaction N-(5-phospho-beta-D-ribosyl)anthranilate + diphosphate = 5-phospho-alpha-D-ribose 1-diphosphate + anthranilate. It functions in the pathway amino-acid biosynthesis; L-tryptophan biosynthesis; L-tryptophan from chorismate: step 2/5. Its function is as follows. Catalyzes the transfer of the phosphoribosyl group of 5-phosphorylribose-1-pyrophosphate (PRPP) to anthranilate to yield N-(5'-phosphoribosyl)-anthranilate (PRA). This is Anthranilate phosphoribosyltransferase from Cupriavidus metallidurans (strain ATCC 43123 / DSM 2839 / NBRC 102507 / CH34) (Ralstonia metallidurans).